We begin with the raw amino-acid sequence, 934 residues long: Progesterone receptor (934 aa).

Residues 1–49 (MTELKSKGPRAPHVAGGPPSPEVGSPLLCRPAAGPFQGSQTSDTLPEVS) form a disordered region. The tract at residues 1–164 (MTELKSKGPR…PATQRVLSPL (164 aa)) is AF3; mediates transcriptional activation. A modulating, Pro-Rich region spans residues 1 to 567 (MTELKSKGPR…YSFESLPQKI (567 aa)). The residue at position 20 (Ser-20) is a Phosphoserine. Residues 55 to 59 (LDGLL) carry the LXXL motif 1 motif. Residues 61-239 (PRLCQGQDPP…EDSAGPLLKG (179 aa)) are disordered. Ser-81 is subject to Phosphoserine. An LXXL motif 2 motif is present at residues 115-119 (LDTLL). Ser-130 and Ser-162 each carry phosphoserine. The segment at 165–305 (MSRSGGKTED…LATTMMDFIH (141 aa)) is mediates transcriptional transrepression. The Nuclear localization signal signature appears at 183–187 (KVLPR). Ser-190 carries the post-translational modification Phosphoserine. Residues 191-203 (PSRQLLLPTSGSP) show a composition bias toward polar residues. A Phosphoserine modification is found at Ser-213. Residues 220–231 (EVEEEDGSESED) show a composition bias toward acidic residues. Phosphoserine; by MAPK1 is present on Ser-294. A disordered region spans residues 331–375 (GGAGAASAFAPPQSSPSASSTPVAVGDFPDCAYPPDAEPKDNAYP). Residues 335–350 (AASAFAPPQSSPSASS) show a composition bias toward low complexity. The residue at position 345 (Ser-345) is a Phosphoserine; by MAPK. A Glycyl lysine isopeptide (Lys-Gly) (interchain with G-Cter in SUMO); alternate cross-link involves residue Lys-388. Lys-388 is covalently cross-linked (Glycyl lysine isopeptide (Lys-Gly) (interchain with G-Cter in ubiquitin); alternate). At Ser-400 the chain carries Phosphoserine; by CDK2. The disordered stretch occupies residues 415–454 (PDFPLGPPPQLPPRAPPSRPGEAAVTAAPASASVSSASSP). Pro residues predominate over residues 418 to 433 (PLGPPPQLPPRAPPSR). Residues 434 to 454 (PGEAAVTAAPASASVSSASSP) are compositionally biased toward low complexity. Positions 456–547 (STLECILYKA…VYPPYLNYLR (92 aa)) are AF1; mediates transcriptional activation. A Glycyl lysine isopeptide (Lys-Gly) (interchain with G-Cter in SUMO) cross-link involves residue Lys-532. 2 NR C4-type zinc fingers span residues 568–588 (CLIC…CGSC) and 604–628 (CAGR…LRKC). Positions 568–640 (CLICGDEASG…AGMVLGGRKF (73 aa)) form a DNA-binding region, nuclear receptor. Ser-677 is modified (phosphoserine). In terms of domain architecture, NR LBD spans 680-914 (QDIQLIPPLI…EFPEMMSEVI (235 aa)). Residues 688 to 934 (LIKLLMSIEP…MVKPLLFHKK (247 aa)) form an AF2; mediates transcriptional activation region. Arg-767 serves as a coordination point for progesterone.

It belongs to the nuclear hormone receptor family. As to quaternary structure, interacts with SMARD1 and UNC45A. Interacts with CUEDC2; the interaction promotes ubiquitination, decreases sumoylation, and represses transcriptional activity. Interacts with PIAS3; the interaction promotes sumoylation of PR in a hormone-dependent manner, inhibits DNA-binding, and alters nuclear export. Interacts with SP1; the interaction requires ligand-induced phosphorylation on Ser-345 by ERK1/2-MAPK. Interacts with PRMT2. Interacts with NCOA2 and NCOA1. Interacts with KLF9. Interacts with GTF2B. Post-translationally, phosphorylated on multiple serine sites. Several of these sites are hormone-dependent. Phosphorylation on Ser-294 is highly hormone-dependent and modulates ubiquitination and sumoylation on Lys-388. Phosphorylation on Ser-345 also requires induction by hormone. Basal phosphorylation on Ser-81, Ser-162, Ser-190 and Ser-400 is increased in response to progesterone and can be phosphorylated in vitro by the CDK2-A1 complex. Increased levels of phosphorylation on Ser-400 also in the presence of EGF, heregulin, IGF, PMA and FBS. Phosphorylation at this site by CDK2 is ligand-independent, and increases nuclear translocation and transcriptional activity. Phosphorylation at Ser-162 and Ser-294, but not at Ser-190, is impaired during the G(2)/M phase of the cell cycle. Phosphorylation on Ser-345 by ERK1/2 MAPK is required for interaction with SP1. In terms of processing, sumoylation is hormone-dependent and represses transcriptional activity. Sumoylation on all three sites is enhanced by PIAS3. Desumoylated by SENP1. Sumoylation on Lys-388, the main site of sumoylation, is repressed by ubiquitination on the same site, and modulated by phosphorylation at Ser-294. Ubiquitination is hormone-dependent and represses sumoylation on the same site. Promoted by MAPK-mediated phosphorylation on Ser-294. Ubiquitinated by UBR5, leading to its degradation: UBR5 specifically recognizes and binds ligand-bound PGR when it is not associated with coactivators (NCOAs). In presence of NCOAs, the UBR5-degron is not accessible, preventing its ubiquitination and degradation. Post-translationally, palmitoylated by ZDHHC7 and ZDHHC21. Palmitoylation is required for plasma membrane targeting and for rapid intracellular signaling via ERK and AKT kinases and cAMP generation.

It is found in the nucleus. The protein resides in the cytoplasm. Its function is as follows. The steroid hormones and their receptors are involved in the regulation of eukaryotic gene expression and affect cellular proliferation and differentiation in target tissues. Transcriptional activator of several progesteron-dependent promoters in a variety of cell types. Involved in activation of SRC-dependent MAPK signaling on hormone stimulation. This Colobus guereza (Mantled guereza) protein is Progesterone receptor (PGR).